The following is a 53-amino-acid chain: IgA-inducing protein homolog (53 aa).

Positions 1-30 (MCSYYHMKKRSVSGCNITIFAVMFSHLSAG) are cleaved as a signal peptide.

The protein resides in the secreted. In terms of biological role, enhances IgA secretion from B-cells stimulated via CD40. The protein is IgA-inducing protein homolog (IGIP) of Homo sapiens (Human).